Here is a 129-residue protein sequence, read N- to C-terminus: Small ribosomal subunit protein uS11 (129 aa).

Belongs to the universal ribosomal protein uS11 family. In terms of assembly, part of the 30S ribosomal subunit. Interacts with proteins S7 and S18. Binds to IF-3.

Its function is as follows. Located on the platform of the 30S subunit, it bridges several disparate RNA helices of the 16S rRNA. Forms part of the Shine-Dalgarno cleft in the 70S ribosome. The sequence is that of Small ribosomal subunit protein uS11 from Hydrogenovibrio crunogenus (strain DSM 25203 / XCL-2) (Thiomicrospira crunogena).